A 75-amino-acid chain; its full sequence is Protein Tlp homolog (75 aa).

The interval 53–75 (REALDGMREEIKDEARDKKNGYM) is disordered.

The protein belongs to the Tlp family.

This chain is Protein Tlp homolog, found in Clostridium botulinum (strain Langeland / NCTC 10281 / Type F).